Reading from the N-terminus, the 363-residue chain is MASGDFCSPGEGMEILQQVCSKQLPPCNLSKEDLLQNPYFSKLLLNLSQHVDESGLSLTLAKEQAQAWKEVRLHKTTWLRSEILHRVIQELLVDYYVKIQDTNVTSEDKKFHETLEQRLLVTELMRLLGPSQEREIPPLLGLEKADLLELMPLSEDFVWMRARLQQEVEEQLKKKCFTLLCYYDPNSDADSETVKAAKVWKLAEVLVGEQQQCQDAKSQQKEQMLLLEKKSAAYSQVLLRCLTLLQRLLQEHRLKTQSELDRINAQYLEVKCGAMILKLRMEELKILSDTYTVEKVEVHRLIRDRLEGAIHLQEQDMENSRQVLNSYEVLGEEFDRLVKEYTVLKQATENKRWALQEFSKVYR.

The protein belongs to the HAUS4 family. In terms of assembly, component of the HAUS augmin-like complex. The complex interacts with the gamma-tubulin ring complex and this interaction is required for spindle assembly. Interacts with EML3 (phosphorylated at 'Thr-881').

It is found in the cytoplasm. It localises to the cytoskeleton. The protein localises to the microtubule organizing center. The protein resides in the centrosome. Its subcellular location is the spindle. Its function is as follows. Contributes to mitotic spindle assembly, maintenance of centrosome integrity and completion of cytokinesis as part of the HAUS augmin-like complex. This is HAUS augmin-like complex subunit 4 (HAUS4) from Homo sapiens (Human).